A 287-amino-acid chain; its full sequence is Syntaxin-11 (287 aa).

Positions 41-71 (LESLYRVIQDIQDENQLLLIDVRRLGRQNVR) form a coiled coil. The 63-residue stretch at 204–266 (LNEIESRHRE…GEAKAQVRKA (63 aa)) folds into the t-SNARE coiled-coil homology domain.

Belongs to the syntaxin family. Interacts with the SNARE proteins SNAP-23 and VAMP.

It localises to the membrane. It is found in the golgi apparatus. Its subcellular location is the trans-Golgi network membrane. SNARE that acts to regulate protein transport between late endosomes and the trans-Golgi network. This is Syntaxin-11 (Stx11) from Mus musculus (Mouse).